Consider the following 428-residue polypeptide: RNA-binding protein 34 (428 aa).

2 disordered regions span residues methionine 1–valine 106 and aspartate 127–glutamate 152. The residue at position 147 (lysine 147) is an N6-acetyllysine. RRM domains lie at arginine 183–glutamate 278 and arginine 285–asparagine 362. Lysine 240 participates in a covalent cross-link: Glycyl lysine isopeptide (Lys-Gly) (interchain with G-Cter in SUMO2). Serine 286 bears the Phosphoserine mark. Residues valine 361–lysine 428 are disordered. Over residues leucine 408–lysine 428 the composition is skewed to basic residues.

It belongs to the RRM RBM34 family.

The protein resides in the nucleus. It is found in the nucleolus. This chain is RNA-binding protein 34 (Rbm34), found in Rattus norvegicus (Rat).